We begin with the raw amino-acid sequence, 117 residues long: Hainantoxin-XV.2 (117 aa).

The N-terminal stretch at 1 to 20 (MKLCAVIIASLLVCAAVASS) is a signal peptide. The tract at residues 18–55 (ASSSDNQKEFAQEKEMTREETQSLGEHEKDDEVTGSEE) is disordered. The propeptide occupies 21 to 56 (SDNQKEFAQEKEMTREETQSLGEHEKDDEVTGSEER). Basic and acidic residues predominate over residues 23–55 (NQKEFAQEKEMTREETQSLGEHEKDDEVTGSEE). Disulfide bonds link C58–C72, C65–C78, C69–C115, and C71–C91.

The protein belongs to the neurotoxin 03 (Tx2) family. 02 subfamily. HNTX-XV sub-subfamily. As to expression, expressed by the venom gland.

It localises to the secreted. Putative ion channel inhibitor. This chain is Hainantoxin-XV.2, found in Cyriopagopus hainanus (Chinese bird spider).